Reading from the N-terminus, the 215-residue chain is Thiopurine S-methyltransferase (215 aa).

S-adenosyl-L-methionine contacts are provided by tryptophan 10, leucine 45, glutamate 66, and arginine 123.

It belongs to the class I-like SAM-binding methyltransferase superfamily. TPMT family.

The protein resides in the cytoplasm. It carries out the reaction S-adenosyl-L-methionine + a thiopurine = S-adenosyl-L-homocysteine + a thiopurine S-methylether.. The chain is Thiopurine S-methyltransferase from Pseudomonas putida (strain W619).